A 385-amino-acid polypeptide reads, in one-letter code: Tyrosine--tRNA ligase 1, cytoplasmic (385 aa).

Residues 77–85 (PSGRMHIAQ) carry the 'HIGH' region motif. The L-tyrosine site is built by tyrosine 200, glutamine 204, aspartate 207, and glutamine 222. Positions 259-263 (KMSKS) match the 'KMSKS' region motif. Residue lysine 262 participates in ATP binding.

It belongs to the class-I aminoacyl-tRNA synthetase family.

It localises to the cytoplasm. It is found in the cytosol. It carries out the reaction tRNA(Tyr) + L-tyrosine + ATP = L-tyrosyl-tRNA(Tyr) + AMP + diphosphate + H(+). Catalyzes the attachment of tyrosine to tRNA(Tyr) in a two-step reaction: tyrosine is first activated by ATP to form Tyr-AMP and then transferred to the acceptor end of tRNA(Tyr). The protein is Tyrosine--tRNA ligase 1, cytoplasmic of Arabidopsis thaliana (Mouse-ear cress).